The following is a 271-amino-acid chain: Solute carrier family 66 member 2 (271 aa).

Transmembrane regions (helical) follow at residues 7–27, 49–69, and 72–92; these read GWLL…AMVF, FSTH…LFWF, and HFES…LLML. In terms of domain architecture, PQ-loop 1 spans 14-80; sequence HQLVSWVAAG…RHFESPLLWQ (67 aa). At serine 110 the chain carries Phosphoserine. 3 helical membrane passes run 143–163, 168–188, and 232–252; these read FADY…ITYL, ALFV…LGVP, and VCGL…YAFA. The region spanning 149-215 is the PQ-loop 2 domain; that stretch reads CVLAFTGVAG…MVLMWTSGDT (67 aa).

The protein resides in the membrane. This chain is Solute carrier family 66 member 2 (Slc66a2), found in Rattus norvegicus (Rat).